Consider the following 467-residue polypeptide: Glycogen synthase (467 aa).

Lysine 15 serves as a coordination point for ADP-alpha-D-glucose.

This sequence belongs to the glycosyltransferase 1 family. Bacterial/plant glycogen synthase subfamily.

The enzyme catalyses [(1-&gt;4)-alpha-D-glucosyl](n) + ADP-alpha-D-glucose = [(1-&gt;4)-alpha-D-glucosyl](n+1) + ADP + H(+). Its pathway is glycan biosynthesis; glycogen biosynthesis. Its function is as follows. Synthesizes alpha-1,4-glucan chains using ADP-glucose. This Desulfitobacterium hafniense (strain DSM 10664 / DCB-2) protein is Glycogen synthase.